A 187-amino-acid polypeptide reads, in one-letter code: MTANHTDDPFLLDYLAGKVFAYPTEAVFGLGCDPDNEQAVNKLLALKQRDVSKGLILVGDNYSQLLPYVDDSAIKMTKRTEIFSSWPGPITWLLPKSKTAPSWVTGESEFIAVRVSAHPLIKDLCQRANKPLVSTSANTAGHPPALSADEVTSYFSNQVILIDGSLGGSRSPSKIRHGHSGQTIRDN.

Residues 4 to 187 enclose the YrdC-like domain; the sequence is NHTDDPFLLD…GHSGQTIRDN (184 aa). The disordered stretch occupies residues 168 to 187; that stretch reads GSRSPSKIRHGHSGQTIRDN.

The protein belongs to the SUA5 family. TsaC subfamily.

It localises to the cytoplasm. The catalysed reaction is L-threonine + hydrogencarbonate + ATP = L-threonylcarbamoyladenylate + diphosphate + H2O. In terms of biological role, required for the formation of a threonylcarbamoyl group on adenosine at position 37 (t(6)A37) in tRNAs that read codons beginning with adenine. Catalyzes the conversion of L-threonine, HCO(3)(-)/CO(2) and ATP to give threonylcarbamoyl-AMP (TC-AMP) as the acyladenylate intermediate, with the release of diphosphate. The chain is Threonylcarbamoyl-AMP synthase from Pseudoalteromonas atlantica (strain T6c / ATCC BAA-1087).